Consider the following 844-residue polypeptide: Aminopeptidase N (844 aa).

Substrate-binding positions include Glu120 and 253 to 257 (GAMEN). His289 serves as a coordination point for Zn(2+). The active-site Proton acceptor is the Glu290. Residues His293 and Glu312 each contribute to the Zn(2+) site.

This sequence belongs to the peptidase M1 family. In terms of assembly, monomer. Zn(2+) serves as cofactor.

The protein localises to the cytoplasm. It carries out the reaction Release of an N-terminal amino acid, Xaa-|-Yaa- from a peptide, amide or arylamide. Xaa is preferably Ala, but may be most amino acids including Pro (slow action). When a terminal hydrophobic residue is followed by a prolyl residue, the two may be released as an intact Xaa-Pro dipeptide.. Functionally, aminopeptidase N is involved in the degradation of intracellular peptides generated by protein breakdown during normal growth as well as in response to nutrient starvation. This is Aminopeptidase N (pepN) from Lactobacillus helveticus (Lactobacillus suntoryeus).